Here is a 331-residue protein sequence, read N- to C-terminus: MIKIGNIELSSNIILAPMSGVTDLEFRRLVKRFGAGLVVSEMVASRAMIVESRQSLKKSAIMRDDATSACVQLAGCEPNVIAEAAKMNEGMGAKIIDLNFGCPAKKVVGGYSGSALMKDEQLAAKIFEATVEAVKLPVTVKMRMGWDDNTKNAPTLAKIAESSGVQMITVHGRTRCQFYSGNADWDFIRSVKESVKIPVIANGDITNFAKAKEALQKSGADGIMVGRGAYGKPWLISQIDHYLKTGEEKSAPSIAEQLDIVTEHYEAILDYYGESVGVPIARKHIGWYSSGLPNSAEFRGAVNLMNDPLAVKEKIAEFYTSVMETNKLKEF.

FMN is bound by residues 17-19 and glutamine 72; that span reads PMS. Cysteine 102 serves as the catalytic Proton donor. FMN is bound by residues lysine 141, 202-204, and 226-227; these read NGD and GR.

Belongs to the Dus family. It depends on FMN as a cofactor.

It catalyses the reaction a 5,6-dihydrouridine in tRNA + NAD(+) = a uridine in tRNA + NADH + H(+). It carries out the reaction a 5,6-dihydrouridine in tRNA + NADP(+) = a uridine in tRNA + NADPH + H(+). Functionally, catalyzes the synthesis of 5,6-dihydrouridine (D), a modified base found in the D-loop of most tRNAs, via the reduction of the C5-C6 double bond in target uridines. The polypeptide is Probable tRNA-dihydrouridine synthase (dus) (Rickettsia conorii (strain ATCC VR-613 / Malish 7)).